A 538-amino-acid chain; its full sequence is Putative cysteine ligase BshC (538 aa).

Residues 460–485 are a coiled coil; the sequence is KINEQIELLERMLKRNIEKKHEVELN.

Belongs to the BshC family.

In terms of biological role, involved in bacillithiol (BSH) biosynthesis. May catalyze the last step of the pathway, the addition of cysteine to glucosamine malate (GlcN-Mal) to generate BSH. The chain is Putative cysteine ligase BshC from Bacillus cereus (strain Q1).